The sequence spans 745 residues: Isocitrate dehydrogenase [NADP] 2 (745 aa).

Positions 87 and 89 each coordinate NADP(+). Residues Ser-134, Asn-137, Arg-141, Arg-147, and Lys-257 each contribute to the D-threo-isocitrate site. Residue Asp-352 participates in Mg(2+) binding. D-threo-isocitrate-binding residues include Tyr-422 and Arg-550. The Mg(2+) site is built by Asp-551 and Asp-555. Positions 587, 588, 589, 592, 603, 605, and 652 each coordinate NADP(+).

The protein belongs to the monomeric-type IDH family. In terms of assembly, may form homotrimers. Also forms homotetramers at low salt concentration, which are dissociated into homodimers, but not into monomers, at high salt concentration (1 M). It depends on Mg(2+) as a cofactor.

The catalysed reaction is D-threo-isocitrate + NADP(+) = 2-oxoglutarate + CO2 + NADPH. Its function is as follows. Catalyzes the oxidative decarboxylation of isocitrate to 2-oxoglutarate and carbon dioxide with the concomitant reduction of NADP(+). Cannot use NAD(+). This chain is Isocitrate dehydrogenase [NADP] 2, found in Mycobacterium tuberculosis (strain ATCC 25618 / H37Rv).